Here is a 605-residue protein sequence, read N- to C-terminus: Aspartate--tRNA(Asp/Asn) ligase (605 aa).

Residue Glu-186 participates in L-aspartate binding. The interval 210 to 213 (QQFK) is aspartate. 2 residues coordinate L-aspartate: Arg-232 and His-460. ATP is bound at residue 232-234 (RDE). Glu-494 contributes to the ATP binding site. L-aspartate is bound at residue Arg-501. 546–549 (GLDR) contacts ATP.

The protein belongs to the class-II aminoacyl-tRNA synthetase family. Type 1 subfamily. Homodimer.

The protein localises to the cytoplasm. The enzyme catalyses tRNA(Asx) + L-aspartate + ATP = L-aspartyl-tRNA(Asx) + AMP + diphosphate. Aspartyl-tRNA synthetase with relaxed tRNA specificity since it is able to aspartylate not only its cognate tRNA(Asp) but also tRNA(Asn). Reaction proceeds in two steps: L-aspartate is first activated by ATP to form Asp-AMP and then transferred to the acceptor end of tRNA(Asp/Asn). In Chlorobium chlorochromatii (strain CaD3), this protein is Aspartate--tRNA(Asp/Asn) ligase.